The chain runs to 119 residues: Ubiquinone biosynthesis accessory factor UbiK (119 aa).

The stretch at 79–99 forms a coiled coil; the sequence is LLRTREKLALLEQRLSELEAR. Residues 96–106 are compositionally biased toward basic and acidic residues; that stretch reads LEARDKPEEVK. The disordered stretch occupies residues 96–119; sequence LEARDKPEEVKPAPAIPPVDPQQE. The span at 109 to 119 shows a compositional bias: pro residues; it reads PAIPPVDPQQE.

The protein belongs to the UbiK family. As to quaternary structure, homotrimer.

The protein localises to the cytoplasm. The protein operates within cofactor biosynthesis; ubiquinone biosynthesis. Required for efficient ubiquinone (coenzyme Q) biosynthesis under aerobic conditions. UbiK is probably an accessory factor of Ubi enzymes and facilitates ubiquinone biosynthesis by acting as an assembly factor, a targeting factor, or both. Dispensable for ubiquinone biosynthesis under anaerobiosis. Required for proliferation in macrophages and virulence in mice. Significantly contributes to colonization and invasion as well as host inflammation and innate immunity after infection. In vitro, has membrane fusogenic activity at acidic pH. The protein is Ubiquinone biosynthesis accessory factor UbiK of Salmonella typhimurium (strain LT2 / SGSC1412 / ATCC 700720).